Consider the following 166-residue polypeptide: Calmodulin-like protein 5 (166 aa).

4 consecutive EF-hand domains span residues 11-46 (EQVAEFRETFAFFDKDGDGCITLEELDTVVRSLGQT), 47-82 (PTREELAEMIRDVDVDGNGTIEFAEFLALMARKASR), 96-131 (AADEELREAFKVFDKDQDGLISAAELRHVMISLGEK), and 132-166 (LTDEEVEQMIREADLDGDGQVNFDEFVRMMMLSDQ). Ca(2+) contacts are provided by Asp24, Asp26, Asp28, Cys30, Glu35, Asp60, Asp62, Asn64, Thr66, Glu71, Asp109, Asp111, Asp113, and Glu120. At Lys131 the chain carries N6,N6,N6-trimethyllysine. Ca(2+) is bound by residues Asp145, Asp147, Asp149, Gln151, and Glu156.

The protein belongs to the calmodulin family.

Its function is as follows. Potential calcium sensor. The protein is Calmodulin-like protein 5 (CML5) of Oryza sativa subsp. japonica (Rice).